A 261-amino-acid polypeptide reads, in one-letter code: Pantothenate synthetase (261 aa).

Residue 29–36 (MGALHNGH) coordinates ATP. The active-site Proton donor is His36. Position 60 (Gln60) interacts with (R)-pantoate. Gln60 lines the beta-alanine pocket. 147–150 (GEKD) is an ATP binding site. A (R)-pantoate-binding site is contributed by Gln153. ATP is bound at residue 184–187 (LSSR).

This sequence belongs to the pantothenate synthetase family. Homodimer.

The protein localises to the cytoplasm. It catalyses the reaction (R)-pantoate + beta-alanine + ATP = (R)-pantothenate + AMP + diphosphate + H(+). Its pathway is cofactor biosynthesis; (R)-pantothenate biosynthesis; (R)-pantothenate from (R)-pantoate and beta-alanine: step 1/1. In terms of biological role, catalyzes the condensation of pantoate with beta-alanine in an ATP-dependent reaction via a pantoyl-adenylate intermediate. The sequence is that of Pantothenate synthetase from Francisella tularensis subsp. novicida (strain U112).